Consider the following 137-residue polypeptide: Actin-depolymerizing factor 7 (137 aa).

The residue at position 6 (Ser6) is a Phosphoserine. One can recognise an ADF-H domain in the interval 7–137 (GMAVEDECKL…SFDIIKSRAL (131 aa)).

The protein belongs to the actin-binding proteins ADF family. In terms of tissue distribution, specifically expressed in pollen.

The protein localises to the cytoplasm. It is found in the cytoskeleton. Functionally, actin-depolymerizing protein. Severs actin filaments (F-actin) and binds to actin monomers. Binds monomeric actin (G-actin) with a marked preference for the ADP-loaded form and inhibits the rate of nucleotide exchange on G-actin. Required for pollen tube growth. Promotes turnover of longitudinal actin cables by severing actin filaments in pollen tubes. The sequence is that of Actin-depolymerizing factor 7 (ADF7) from Arabidopsis thaliana (Mouse-ear cress).